Here is a 102-residue protein sequence, read N- to C-terminus: Plastocyanin (102 aa).

The Plastocyanin-like domain occupies 1–102 (AKVEVGDEVG…ANMKGTLTVK (102 aa)). 4 residues coordinate Cu cation: H37, C87, H90, and M95.

This sequence belongs to the plastocyanin family. Requires Cu(2+) as cofactor.

It localises to the plastid. The protein localises to the chloroplast thylakoid membrane. Its function is as follows. Participates in electron transfer between P700 and the cytochrome b6-f complex in photosystem I. This Dryopteris crassirhizoma (Thick stemmed wood fern) protein is Plastocyanin (PETE).